A 91-amino-acid chain; its full sequence is Probable Fe(2+)-trafficking protein (91 aa).

This sequence belongs to the Fe(2+)-trafficking protein family. As to quaternary structure, monomer.

Could be a mediator in iron transactions between iron acquisition and iron-requiring processes, such as synthesis and/or repair of Fe-S clusters in biosynthetic enzymes. This Escherichia coli O7:K1 (strain IAI39 / ExPEC) protein is Probable Fe(2+)-trafficking protein.